Here is a 39-residue protein sequence, read N- to C-terminus: Photosystem II reaction center protein X (39 aa).

Residues 10–30 (WSLLWGTAIVVIPVTVGLIFI) traverse the membrane as a helical segment.

It belongs to the PsbX family. Type 1 subfamily. In terms of assembly, PSII is composed of 1 copy each of membrane proteins PsbA, PsbB, PsbC, PsbD, PsbE, PsbF, PsbH, PsbI, PsbJ, PsbK, PsbL, PsbM, PsbT, PsbX, PsbY, PsbZ, Psb30/Ycf12, peripheral proteins PsbO, CyanoQ (PsbQ), PsbU, PsbV and a large number of cofactors. It forms dimeric complexes.

The protein localises to the cellular thylakoid membrane. Involved in the binding and/or turnover of quinones at the Q(B) site of photosystem II (PSII). PSII is a light-driven water plastoquinone oxidoreductase, using light energy to abstract electrons from H(2)O, generating a proton gradient subsequently used for ATP formation. The protein is Photosystem II reaction center protein X of Nostoc punctiforme (strain ATCC 29133 / PCC 73102).